The chain runs to 191 residues: Elongation factor P (191 aa).

N6-(3,6-diaminohexanoyl)-5-hydroxylysine is present on Lys-34.

This sequence belongs to the elongation factor P family. In terms of processing, may be beta-lysylated on the epsilon-amino group of Lys-34 by the combined action of EpmA and EpmB, and then hydroxylated on the C5 position of the same residue by EpmC (if this protein is present). Lysylation is critical for the stimulatory effect of EF-P on peptide-bond formation. The lysylation moiety may extend toward the peptidyltransferase center and stabilize the terminal 3-CCA end of the tRNA. Hydroxylation of the C5 position on Lys-34 may allow additional potential stabilizing hydrogen-bond interactions with the P-tRNA.

It is found in the cytoplasm. It participates in protein biosynthesis; polypeptide chain elongation. In terms of biological role, involved in peptide bond synthesis. Alleviates ribosome stalling that occurs when 3 or more consecutive Pro residues or the sequence PPG is present in a protein, possibly by augmenting the peptidyl transferase activity of the ribosome. Modification of Lys-34 is required for alleviation. This chain is Elongation factor P, found in Psychrobacter sp. (strain PRwf-1).